The chain runs to 172 residues: Adenine phosphoribosyltransferase (172 aa).

Belongs to the purine/pyrimidine phosphoribosyltransferase family. As to quaternary structure, homodimer.

The protein localises to the cytoplasm. The enzyme catalyses AMP + diphosphate = 5-phospho-alpha-D-ribose 1-diphosphate + adenine. The protein operates within purine metabolism; AMP biosynthesis via salvage pathway; AMP from adenine: step 1/1. Catalyzes a salvage reaction resulting in the formation of AMP, that is energically less costly than de novo synthesis. The chain is Adenine phosphoribosyltransferase from Herpetosiphon aurantiacus (strain ATCC 23779 / DSM 785 / 114-95).